The chain runs to 246 residues: UPF0246 protein str1967 (246 aa).

Belongs to the UPF0246 family.

The chain is UPF0246 protein str1967 from Streptococcus thermophilus (strain CNRZ 1066).